Consider the following 96-residue polypeptide: uncharacterized protein (96 aa).

The protein belongs to the NifU family.

This is an uncharacterized protein from Azotobacter vinelandii.